The chain runs to 138 residues: Ribosome-binding factor A (138 aa).

A disordered region spans residues 117-138; that stretch reads AEDGQHQEGPASADAKPESTEE.

Belongs to the RbfA family. As to quaternary structure, monomer. Binds 30S ribosomal subunits, but not 50S ribosomal subunits or 70S ribosomes.

It is found in the cytoplasm. One of several proteins that assist in the late maturation steps of the functional core of the 30S ribosomal subunit. Associates with free 30S ribosomal subunits (but not with 30S subunits that are part of 70S ribosomes or polysomes). Required for efficient processing of 16S rRNA. May interact with the 5'-terminal helix region of 16S rRNA. The polypeptide is Ribosome-binding factor A (Pseudomonas syringae pv. syringae (strain B728a)).